The primary structure comprises 110 residues: Insulin (110 aa).

An N-terminal signal peptide occupies residues M1–A24. Disulfide bonds link C31–C96, C43–C109, and C95–C100. A propeptide spans E57–Q87 (c peptide).

The protein belongs to the insulin family. As to quaternary structure, heterodimer of a B chain and an A chain linked by two disulfide bonds.

It is found in the secreted. Insulin decreases blood glucose concentration. It increases cell permeability to monosaccharides, amino acids and fatty acids. It accelerates glycolysis, the pentose phosphate cycle, and glycogen synthesis in liver. The polypeptide is Insulin (INS) (Cavia porcellus (Guinea pig)).